The following is a 251-amino-acid chain: CDP-diacylglycerol pyrophosphatase (251 aa).

A helical membrane pass occupies residues 5–25 (GYFLLAVIVIVAAAGVGYWKF).

The protein belongs to the Cdh family.

It is found in the cell inner membrane. The enzyme catalyses a CDP-1,2-diacyl-sn-glycerol + H2O = a 1,2-diacyl-sn-glycero-3-phosphate + CMP + 2 H(+). It participates in phospholipid metabolism; CDP-diacylglycerol degradation; phosphatidate from CDP-diacylglycerol: step 1/1. The protein is CDP-diacylglycerol pyrophosphatase of Salmonella enteritidis PT4 (strain P125109).